A 229-amino-acid chain; its full sequence is MLYAFKLGRKLRGEEPLYPEKGGKGGSSSSGAKEAARATQYAADLQNQQFNRVMEQLAPYAAAGLPALQQIQQLSTLEGQNSALNQYYNSDQYKQLADQARYQSLNAAEATGGLGSTATSNQIASIAPTLGQNWLSGQMQNYGNLLNVGQSAAAGQASAGQNYANNAGNLAQQMAAIRSQGSGQSTLGSAISGGTSGALAGAGLAGMLGASTPWGAGIGAGIGLLGSLF.

The disordered stretch occupies residues 14-36 (EEPLYPEKGGKGGSSSSGAKEAA).

It belongs to the podoviruses gp7 family.

Component of the phage injection machinery. Required for injection of the phage DNA into the host. This chain is DNA transfer protein gp7 (7), found in Salmonella typhimurium (Bacteriophage ST64T).